Reading from the N-terminus, the 1147-residue chain is Putative ATP-dependent RNA helicase L377 (1147 aa).

Residues 108-315 form the Helicase ATP-binding domain; it reads INPNTPYRGL…VELINYLRPK (208 aa). 121 to 128 is an ATP binding site; it reads WGTGVGKS. Positions 264 to 267 match the DEAH box motif; it reads DEAH.

It belongs to the DEAD box helicase family. DEAH subfamily.

It is found in the virion. The catalysed reaction is ATP + H2O = ADP + phosphate + H(+). In Acanthamoeba polyphaga (Amoeba), this protein is Putative ATP-dependent RNA helicase L377.